Reading from the N-terminus, the 1213-residue chain is tRNA wybutosine-synthesizing protein 4 (1213 aa).

Composition is skewed to low complexity over residues 1 to 13 (METT…PATT) and 39 to 52 (ATTT…TTPT). Residues 1–76 (METTEEVVAP…DDQVMGTNNS (76 aa)) are disordered. Over residues 53–67 (HNEHASAKDPRKAQD) the composition is skewed to basic and acidic residues. Residues arginine 117, glycine 148, and aspartate 180 each contribute to the S-adenosyl-L-methionine site. Residues 215-248 (STPAATTTAAATTTTTTELKTTAATASSTSTEAP) are compositionally biased toward low complexity. Residues 215–272 (STPAATTTAAATTTTTTELKTTAATASSTSTEAPQKPKKSPKPKDKSKAARAPAPTTA) form a disordered region. Residues 289–290 (DL) and glutamate 318 each bind S-adenosyl-L-methionine. The segment at 879-900 (EPRSLPLRNQAPNGAEGNANGS) is disordered. Positions 1006 to 1166 (PTEKPAVLSD…YAAGKDVYGN (161 aa)) constitute a JmjC domain.

The protein belongs to the methyltransferase superfamily. LCMT family.

It catalyses the reaction 7-[(3S)-3-amino-3-carboxypropyl]wyosine(37) in tRNA(Phe) + S-adenosyl-L-methionine = 7-[(3S)-(3-amino-3-methoxycarbonyl)propyl]wyosine(37) in tRNA(Phe) + S-adenosyl-L-homocysteine. It carries out the reaction 7-[(3S)-(3-amino-3-methoxycarbonyl)propyl]wyosine(37) in tRNA(Phe) + S-adenosyl-L-methionine + CO2 = wybutosine(37) in tRNA(Phe) + S-adenosyl-L-homocysteine + 2 H(+). It functions in the pathway tRNA modification; wybutosine-tRNA(Phe) biosynthesis. In terms of biological role, probable S-adenosyl-L-methionine-dependent methyltransferase that acts as a component of the wybutosine biosynthesis pathway. Wybutosine is a hyper modified guanosine with a tricyclic base found at the 3'-position adjacent to the anticodon of eukaryotic phenylalanine tRNA. May methylate the carboxyl group of leucine residues to form alpha-leucine ester residues. The chain is tRNA wybutosine-synthesizing protein 4 (lcm-2) from Neurospora crassa (strain ATCC 24698 / 74-OR23-1A / CBS 708.71 / DSM 1257 / FGSC 987).